The following is a 140-amino-acid chain: Protein ripply1 (140 aa).

A WRPW motif; required for gro2-binding motif is present at residues 28 to 31; it reads WRPW. Positions 71–106 are ripply homology domain; that stretch reads HPVRLYWPRSKSFDYLFSDGEALLRNFPVQATINFY. The interval 107 to 126 is disordered; sequence DESDSEDEEESCDEDDESDV.

Belongs to the ripply family. In terms of assembly, interacts with gro2 via the WRPW motif. As to expression, expressed in the embryonic anterior presomitic mesoderm and in newly formed somites.

The protein localises to the nucleus. Its function is as follows. Plays a role in somitogenesis. Essential for transcriptional repression of the segmental patterning genes, thus terminating the segmentation program in the presomitic mesoderm, and also required for the maintenance of rostrocaudal polarity in somites. The protein is Protein ripply1 of Danio rerio (Zebrafish).